Reading from the N-terminus, the 806-residue chain is WEB family protein At3g02930, chloroplastic (806 aa).

A chloroplast-targeting transit peptide spans M1–R78. Disordered regions lie at residues M1–E94 and K380–K403. The span at L9–L22 shows a compositional bias: low complexity. The segment covering P34–P59 has biased composition (polar residues). 3 coiled-coil regions span residues Q88 to A530, D585 to N662, and E698 to N757. The span at E391–K403 shows a compositional bias: basic and acidic residues. Disordered regions lie at residues E684–T725 and K746–L777. 2 stretches are compositionally biased toward basic and acidic residues: residues N685–T699 and K706–T725. The segment covering V759–N769 has biased composition (polar residues).

This sequence belongs to the WEB family.

The protein localises to the plastid. Its subcellular location is the chloroplast. The polypeptide is WEB family protein At3g02930, chloroplastic (Arabidopsis thaliana (Mouse-ear cress)).